Consider the following 253-residue polypeptide: Imidazole glycerol phosphate synthase subunit HisF (253 aa).

Active-site residues include Asp-11 and Asp-130.

Belongs to the HisA/HisF family. As to quaternary structure, heterodimer of HisH and HisF.

The protein resides in the cytoplasm. It catalyses the reaction 5-[(5-phospho-1-deoxy-D-ribulos-1-ylimino)methylamino]-1-(5-phospho-beta-D-ribosyl)imidazole-4-carboxamide + L-glutamine = D-erythro-1-(imidazol-4-yl)glycerol 3-phosphate + 5-amino-1-(5-phospho-beta-D-ribosyl)imidazole-4-carboxamide + L-glutamate + H(+). Its pathway is amino-acid biosynthesis; L-histidine biosynthesis; L-histidine from 5-phospho-alpha-D-ribose 1-diphosphate: step 5/9. In terms of biological role, IGPS catalyzes the conversion of PRFAR and glutamine to IGP, AICAR and glutamate. The HisF subunit catalyzes the cyclization activity that produces IGP and AICAR from PRFAR using the ammonia provided by the HisH subunit. The sequence is that of Imidazole glycerol phosphate synthase subunit HisF from Acetivibrio thermocellus (strain ATCC 27405 / DSM 1237 / JCM 9322 / NBRC 103400 / NCIMB 10682 / NRRL B-4536 / VPI 7372) (Clostridium thermocellum).